The sequence spans 158 residues: N-alpha-acetyltransferase RimI (158 aa).

The 148-residue stretch at 8–155 (VTIGALTRAD…DAYTMRRDSG (148 aa)) folds into the N-acetyltransferase domain.

Belongs to the acetyltransferase family. RimI subfamily. Monomer. Interacts with TsaD. Interacts with GroS/GroES.

It carries out the reaction N-terminal L-methionyl-L-alanyl-[protein] + acetyl-CoA = N-terminal N(alpha)-acetyl-L-methionyl-L-alanyl-[protein] + CoA + H(+). The enzyme catalyses N-terminal L-methionyl-L-seryl-[protein] + acetyl-CoA = N-terminal N(alpha)-acetyl-L-methionyl-L-seryl-[protein] + CoA + H(+). It catalyses the reaction N-terminal L-methionyl-L-valyl-[protein] + acetyl-CoA = N-terminal N(alpha)-acetyl-L-methionyl-L-valyl-[protein] + CoA + H(+). The catalysed reaction is N-terminal L-methionyl-L-threonyl-[protein] + acetyl-CoA = N-terminal N(alpha)-acetyl-L-methionyl-L-threonyl-[protein] + CoA + H(+). It carries out the reaction N-terminal L-methionyl-L-lysyl-[protein] + acetyl-CoA = N-terminal N(alpha)-acetyl-L-methionyl-L-lysyl-[protein] + CoA + H(+). The enzyme catalyses N-terminal L-methionyl-L-leucyl-[protein] + acetyl-CoA = N-terminal N(alpha)-acetyl-L-methionyl-L-leucyl-[protein] + CoA + H(+). It catalyses the reaction N-terminal L-methionyl-L-phenylalanyl-[protein] + acetyl-CoA = N-terminal N(alpha)-acetyl-L-methionyl-L-phenylalanyl-[protein] + CoA + H(+). The catalysed reaction is N-terminal L-methionyl-L-tyrosyl-[protein] + acetyl-CoA = N-terminal N(alpha)-acetyl-L-methionyl-L-tyrosyl-[protein] + CoA + H(+). It carries out the reaction N-terminal glycyl-[protein] + acetyl-CoA = N-terminal N(alpha)-acetylglycyl-[protein] + CoA + H(+). The enzyme catalyses N-terminal L-alanyl-[protein] + acetyl-CoA = N-terminal N(alpha)-acetyl-L-alanyl-[protein] + CoA + H(+). It catalyses the reaction N-terminal L-seryl-[protein] + acetyl-CoA = N-terminal N(alpha)-acetyl-L-seryl-[protein] + CoA + H(+). The catalysed reaction is N-terminal L-valyl-[protein] + acetyl-CoA = N-terminal N(alpha)-acetyl-L-valyl-[protein] + CoA + H(+). It carries out the reaction N-terminal L-cysteinyl-[protein] + acetyl-CoA = N-terminal N(alpha)-acetyl-L-cysteinyl-[protein] + CoA + H(+). The enzyme catalyses N-terminal L-threonyl-[protein] + acetyl-CoA = N-terminal N(alpha)-acetyl-L-threonyl-[protein] + CoA + H(+). N-alpha-acetyltransferase that specifically mediates the acetylation of N-terminal residues. Able to mediate acetylation of a wide variety of N-terminal residues, with preference for hydrophobic N-termini. Acetylates GroS/GroES and GroEL1. Able to acetylate the ribosomal protein bS18, but it is unclear whether it acetylates its N-terminal alanine residue. This is N-alpha-acetyltransferase RimI from Mycobacterium tuberculosis (strain ATCC 25618 / H37Rv).